The primary structure comprises 175 residues: Bifunctional protein PyrR (175 aa).

The PRPP-binding motif lies at 97–109 (IVLIDDVLFTGRT).

The protein belongs to the purine/pyrimidine phosphoribosyltransferase family. PyrR subfamily. Homodimer and homohexamer; in equilibrium.

The enzyme catalyses UMP + diphosphate = 5-phospho-alpha-D-ribose 1-diphosphate + uracil. Functionally, regulates transcriptional attenuation of the pyrimidine nucleotide (pyr) operon by binding in a uridine-dependent manner to specific sites on pyr mRNA. This disrupts an antiterminator hairpin in the RNA and favors formation of a downstream transcription terminator, leading to a reduced expression of downstream genes. Also displays a weak uracil phosphoribosyltransferase activity which is not physiologically significant. The sequence is that of Bifunctional protein PyrR from Leuconostoc mesenteroides subsp. mesenteroides (strain ATCC 8293 / DSM 20343 / BCRC 11652 / CCM 1803 / JCM 6124 / NCDO 523 / NBRC 100496 / NCIMB 8023 / NCTC 12954 / NRRL B-1118 / 37Y).